Reading from the N-terminus, the 87-residue chain is Small ribosomal subunit protein bS20 (87 aa).

The protein belongs to the bacterial ribosomal protein bS20 family.

Functionally, binds directly to 16S ribosomal RNA. The chain is Small ribosomal subunit protein bS20 from Lachnoclostridium phytofermentans (strain ATCC 700394 / DSM 18823 / ISDg) (Clostridium phytofermentans).